Here is a 116-residue protein sequence, read N- to C-terminus: Phosphoribosyl-ATP pyrophosphatase (116 aa).

This sequence belongs to the PRA-PH family.

It localises to the cytoplasm. The enzyme catalyses 1-(5-phospho-beta-D-ribosyl)-ATP + H2O = 1-(5-phospho-beta-D-ribosyl)-5'-AMP + diphosphate + H(+). It functions in the pathway amino-acid biosynthesis; L-histidine biosynthesis; L-histidine from 5-phospho-alpha-D-ribose 1-diphosphate: step 2/9. The chain is Phosphoribosyl-ATP pyrophosphatase from Bordetella avium (strain 197N).